The following is a 543-amino-acid chain: Hydroxylamine reductase (543 aa).

4 residues coordinate [4Fe-4S] cluster: C5, C8, C17, and C23. 8 residues coordinate hybrid [4Fe-2O-2S] cluster: H236, E260, C304, C398, C426, C451, E486, and K488. C398 bears the Cysteine persulfide mark.

Belongs to the HCP family. Requires [4Fe-4S] cluster as cofactor. Hybrid [4Fe-2O-2S] cluster serves as cofactor.

It is found in the cytoplasm. The catalysed reaction is A + NH4(+) + H2O = hydroxylamine + AH2 + H(+). Catalyzes the reduction of hydroxylamine to form NH(3) and H(2)O. This chain is Hydroxylamine reductase, found in Bacteroides fragilis (strain YCH46).